A 182-amino-acid polypeptide reads, in one-letter code: Probable nicotinate-nucleotide adenylyltransferase (182 aa).

Belongs to the NadD family.

The enzyme catalyses nicotinate beta-D-ribonucleotide + ATP + H(+) = deamido-NAD(+) + diphosphate. Its pathway is cofactor biosynthesis; NAD(+) biosynthesis; deamido-NAD(+) from nicotinate D-ribonucleotide: step 1/1. Functionally, catalyzes the reversible adenylation of nicotinate mononucleotide (NaMN) to nicotinic acid adenine dinucleotide (NaAD). The polypeptide is Probable nicotinate-nucleotide adenylyltransferase (Sulfurimonas denitrificans (strain ATCC 33889 / DSM 1251) (Thiomicrospira denitrificans (strain ATCC 33889 / DSM 1251))).